Reading from the N-terminus, the 1119-residue chain is Protein translocase subunit SecA (1119 aa).

Residues Q177, 195–199 (GEGKT), and D692 contribute to the ATP site. The disordered stretch occupies residues 1025-1081 (APSIHEARQTKSKEKVETRKEEIPNMDERAAQSRAAGNTQRQQPEVTETIVRDRPKI). The segment covering 1029-1055 (HEARQTKSKEKVETRKEEIPNMDERAA) has biased composition (basic and acidic residues). The span at 1059-1070 (AAGNTQRQQPEV) shows a compositional bias: polar residues.

The protein belongs to the SecA family. In terms of assembly, monomer and homodimer. Part of the essential Sec protein translocation apparatus which comprises SecA, SecYEG and auxiliary proteins SecDF. Other proteins may also be involved.

The protein localises to the cell inner membrane. It is found in the cytoplasm. The catalysed reaction is ATP + H2O + cellular proteinSide 1 = ADP + phosphate + cellular proteinSide 2.. In terms of biological role, part of the Sec protein translocase complex. Interacts with the SecYEG preprotein conducting channel. Has a central role in coupling the hydrolysis of ATP to the transfer of proteins into and across the cell membrane, serving as an ATP-driven molecular motor driving the stepwise translocation of polypeptide chains across the membrane. In Christiangramia forsetii (strain DSM 17595 / CGMCC 1.15422 / KT0803) (Gramella forsetii), this protein is Protein translocase subunit SecA.